We begin with the raw amino-acid sequence, 301 residues long: Methionyl-tRNA formyltransferase (301 aa).

109–112 (SILP) is a binding site for (6S)-5,6,7,8-tetrahydrofolate.

This sequence belongs to the Fmt family.

It catalyses the reaction L-methionyl-tRNA(fMet) + (6R)-10-formyltetrahydrofolate = N-formyl-L-methionyl-tRNA(fMet) + (6S)-5,6,7,8-tetrahydrofolate + H(+). Its function is as follows. Attaches a formyl group to the free amino group of methionyl-tRNA(fMet). The formyl group appears to play a dual role in the initiator identity of N-formylmethionyl-tRNA by promoting its recognition by IF2 and preventing the misappropriation of this tRNA by the elongation apparatus. This Campylobacter curvus (strain 525.92) protein is Methionyl-tRNA formyltransferase.